Consider the following 90-residue polypeptide: UPF0237 protein MK1213 (90 aa).

One can recognise an ACT domain in the interval 5 to 79 (VVTVIGADRP…EELGVDVIVQ (75 aa)).

The protein belongs to the UPF0237 family.

This Methanopyrus kandleri (strain AV19 / DSM 6324 / JCM 9639 / NBRC 100938) protein is UPF0237 protein MK1213.